The primary structure comprises 477 residues: Shikimate biosynthesis protein AroDE (477 aa).

The 3-dehydroquinate dehydratase stretch occupies residues Met-1–Ser-209. Residues Ser-21, Glu-29 to Arg-31, and Thr-56 to Arg-58 each bind 3-dehydroquinate. Catalysis depends on His-111, which acts as the Proton donor/acceptor; for 3-dehydroquinate dehydratase activity. The Schiff-base intermediate with substrate; for 3-dehydroquinate dehydratase activity role is filled by Lys-134. 2 residues coordinate 3-dehydroquinate: Arg-172 and Gln-197. Positions Lys-210–Val-477 are shikimate 5-dehydrogenase. Ser-228–Ser-230 lines the shikimate pocket. Lys-279 (proton acceptor; for shikimate dehydrogenase activity) is an active-site residue. Residues Asn-300 and Asp-315 each coordinate shikimate. NADP(+) contacts are provided by residues Gly-339–Ala-343, Asn-362–Thr-364, and Gly-438. Residue Gln-445 coordinates shikimate.

In the N-terminal section; belongs to the type-I 3-dehydroquinase family. It in the C-terminal section; belongs to the shikimate dehydrogenase family.

The enzyme catalyses 3-dehydroquinate = 3-dehydroshikimate + H2O. The catalysed reaction is shikimate + NADP(+) = 3-dehydroshikimate + NADPH + H(+). The protein operates within metabolic intermediate biosynthesis; chorismate biosynthesis; chorismate from D-erythrose 4-phosphate and phosphoenolpyruvate: step 3/7. Its pathway is metabolic intermediate biosynthesis; chorismate biosynthesis; chorismate from D-erythrose 4-phosphate and phosphoenolpyruvate: step 4/7. Its function is as follows. Bifunctional enzyme that catalyzes two sequential steps of the aromatic amino acids biosynthetic pathway. In the first reaction, the AroD domain catalyzes the cis-dehydration of 3-dehydroquinate (DHQ) and introduces the first double bond of the aromatic ring to yield 3-dehydroshikimate; in the second reaction, the AroE domain catalyzes the reversible NADPH linked reduction of 3-dehydroshikimate (DHSA) to yield shikimate (SA). This chain is Shikimate biosynthesis protein AroDE, found in Chlamydia pneumoniae (Chlamydophila pneumoniae).